The primary structure comprises 351 residues: MSGLIAYCRQGFEPELAAELRDRAVLLGIAGDIYAQRNHGFVLLRCDPLHVDTLLQQLHWRRLIFARQTLRLHAELKTLNSRDRIAPILAALPKTPCFGDLWIEYPDSDMGKPLAGLARSFGNALRPVLRSAGRLSAQLHPQWPRLHVCFLSGDHVLLGSTRSVDSAPWQLGIPRLKLLPEAPSRSALKLEEALITLLTPNEREAKLRPGMQATDLGAAPGGWTWVLIRQHLRVTSIDNAALRPPLLNHPLVQHVRADGFRWTPPRPMDWMVCDMVEQPRRVAERMAVWLREGWCRHMIFNLKLPMKKRWDETRLCLERFETQAAVPLTLRAKQLYHDREEITVYASNDAR.

Residues S186, 219-222 (APGG), D238, D258, and D274 contribute to the S-adenosyl-L-methionine site. Residue K303 is the Proton acceptor of the active site.

The protein belongs to the class I-like SAM-binding methyltransferase superfamily. RNA methyltransferase RlmE family. RlmM subfamily. Monomer.

Its subcellular location is the cytoplasm. The enzyme catalyses cytidine(2498) in 23S rRNA + S-adenosyl-L-methionine = 2'-O-methylcytidine(2498) in 23S rRNA + S-adenosyl-L-homocysteine + H(+). Its function is as follows. Catalyzes the 2'-O-methylation at nucleotide C2498 in 23S rRNA. In Xylella fastidiosa (strain M12), this protein is Ribosomal RNA large subunit methyltransferase M.